The following is a 138-amino-acid chain: Translation initiation factor IF-1, chloroplastic (138 aa).

The N-terminal 53 residues, 1-53 (MFTSLHTPILHPRYCHHPTPSCTQFSPLALPPFHRTLSFLAPPPLLPAAPALS), are a transit peptide targeting the chloroplast. An S1-like domain is found at 58-133 (AKPDKSGEQK…SKGRIVYRLR (76 aa)).

Belongs to the IF-1 family. Component of the 30S ribosomal translation pre-initiation complex which assembles on the 30S ribosome in the order IF-2 and IF-3, IF-1 and N-formylmethionyl-tRNA(fMet); mRNA recruitment can occur at any time during PIC assembly.

The protein resides in the plastid. It localises to the chloroplast. One of the essential components for the initiation of protein synthesis. Stabilizes the binding of IF-2 and IF-3 on the 30S subunit to which N-formylmethionyl-tRNA(fMet) subsequently binds. Helps modulate mRNA selection, yielding the 30S pre-initiation complex (PIC). Upon addition of the 50S ribosomal subunit IF-1, IF-2 and IF-3 are released leaving the mature 70S translation initiation complex. In Glycine max (Soybean), this protein is Translation initiation factor IF-1, chloroplastic (infA).